The sequence spans 149 residues: Nucleoside diphosphate kinase (149 aa).

ATP contacts are provided by lysine 9, phenylalanine 57, arginine 85, threonine 91, arginine 102, and asparagine 112. Catalysis depends on histidine 115, which acts as the Pros-phosphohistidine intermediate.

The protein belongs to the NDK family. It depends on Mg(2+) as a cofactor.

Its subcellular location is the cytoplasm. The enzyme catalyses a 2'-deoxyribonucleoside 5'-diphosphate + ATP = a 2'-deoxyribonucleoside 5'-triphosphate + ADP. The catalysed reaction is a ribonucleoside 5'-diphosphate + ATP = a ribonucleoside 5'-triphosphate + ADP. Its function is as follows. Major role in the synthesis of nucleoside triphosphates other than ATP. The ATP gamma phosphate is transferred to the NDP beta phosphate via a ping-pong mechanism, using a phosphorylated active-site intermediate. The polypeptide is Nucleoside diphosphate kinase (Methanosarcina mazei (strain ATCC BAA-159 / DSM 3647 / Goe1 / Go1 / JCM 11833 / OCM 88) (Methanosarcina frisia)).